An 887-amino-acid polypeptide reads, in one-letter code: DNA gyrase subunit A (887 aa).

The region spanning 35-501 (LPDVRDGLKP…GFENLEDEDL (467 aa)) is the Topo IIA-type catalytic domain. Catalysis depends on Y123, which acts as the O-(5'-phospho-DNA)-tyrosine intermediate. Residues 528 to 534 (QNRGGRG) carry the GyrA-box motif. Residues 811 to 864 (KEDAEDETNEDEQSTSTVSEDGTEQQREAVVNDETPGNAIHTEVIDSEENDEDG) form a disordered region. Residues 813–823 (DAEDETNEDEQ) are compositionally biased toward acidic residues.

This sequence belongs to the type II topoisomerase GyrA/ParC subunit family. Heterotetramer, composed of two GyrA and two GyrB chains. In the heterotetramer, GyrA contains the active site tyrosine that forms a transient covalent intermediate with DNA, while GyrB binds cofactors and catalyzes ATP hydrolysis.

The protein resides in the cytoplasm. It carries out the reaction ATP-dependent breakage, passage and rejoining of double-stranded DNA.. A type II topoisomerase that negatively supercoils closed circular double-stranded (ds) DNA in an ATP-dependent manner to modulate DNA topology and maintain chromosomes in an underwound state. Negative supercoiling favors strand separation, and DNA replication, transcription, recombination and repair, all of which involve strand separation. Also able to catalyze the interconversion of other topological isomers of dsDNA rings, including catenanes and knotted rings. Type II topoisomerases break and join 2 DNA strands simultaneously in an ATP-dependent manner. The polypeptide is DNA gyrase subunit A (Staphylococcus aureus (strain COL)).